The primary structure comprises 100 residues: Urease subunit gamma (100 aa).

This sequence belongs to the urease gamma subunit family. As to quaternary structure, heterotrimer of UreA (gamma), UreB (beta) and UreC (alpha) subunits. Three heterotrimers associate to form the active enzyme.

The protein localises to the cytoplasm. The catalysed reaction is urea + 2 H2O + H(+) = hydrogencarbonate + 2 NH4(+). It participates in nitrogen metabolism; urea degradation; CO(2) and NH(3) from urea (urease route): step 1/1. This is Urease subunit gamma from Alcanivorax borkumensis (strain ATCC 700651 / DSM 11573 / NCIMB 13689 / SK2).